Consider the following 77-residue polypeptide: TSC22 domain family protein 3 (77 aa).

The residue at position 1 (Met1) is an N-acetylmethionine. Residues 19–40 are leucine-zipper; the sequence is LKEQIRELVEKNSQLERENTLL. The tract at residues 41–77 is disordered; the sequence is KTLASPEQLEKFQSRLSPEEPAPETPEAPEAPGGSAV. Ser45 is subject to Phosphoserine. Low complexity predominate over residues 68–77; that stretch reads APEAPGGSAV.

It belongs to the TSC-22/Dip/Bun family. In terms of assembly, can form homodimers, however it is likely to function as a monomer. Interacts with AP1 and NFKB1. Interacts with MYOD1. Interacts with HDAC1; this interaction affects HDAC1 activity on MYOG promoter and thus inhibits MYOD1 transcriptional activity.

The protein localises to the cytoplasm. It localises to the nucleus. Protects T-cells from IL2 deprivation-induced apoptosis through the inhibition of FOXO3A transcriptional activity that leads to the down-regulation of the pro-apoptotic factor BCL2L11. In macrophages, plays a role in the anti-inflammatory and immunosuppressive effects of glucocorticoids and IL10. In T-cells, inhibits anti-CD3-induced NFKB1 nuclear translocation. In vitro, suppresses AP1 and NFKB1 DNA-binding activities. Inhibits myogenic differentiation and mediates anti-myogenic effects of glucocorticoids by binding and regulating MYOD1 and HDAC1 transcriptional activity resulting in reduced expression of MYOG. The polypeptide is TSC22 domain family protein 3 (TSC22D3) (Sus scrofa (Pig)).